An 840-amino-acid polypeptide reads, in one-letter code: Probable alpha-glucuronidase A (840 aa).

The signal sequence occupies residues 1–19; sequence MRSVITTLTLVASVGLAVA. N-linked (GlcNAc...) asparagine glycans are attached at residues Asn-222, Asn-310, Asn-465, Asn-527, Asn-576, Asn-682, and Asn-732.

The protein belongs to the glycosyl hydrolase 67 family.

It is found in the secreted. The enzyme catalyses an alpha-D-glucuronoside + H2O = D-glucuronate + an alcohol. In terms of biological role, alpha-glucuronidase involved in the hydrolysis of xylan, a major structural heterogeneous polysaccharide found in plant biomass representing the second most abundant polysaccharide in the biosphere, after cellulose. Releases 4-O-methylglucuronic acid from xylan. This Aspergillus clavatus (strain ATCC 1007 / CBS 513.65 / DSM 816 / NCTC 3887 / NRRL 1 / QM 1276 / 107) protein is Probable alpha-glucuronidase A (aguA).